Here is a 231-residue protein sequence, read N- to C-terminus: ATP-dependent dethiobiotin synthetase BioD (231 aa).

Position 12-17 (12-17 (EVGKTV)) interacts with ATP. Thr16 contacts Mg(2+). Lys37 is an active-site residue. Ser41 contributes to the substrate binding site. ATP-binding positions include Asp51, 112-115 (EGAG), and 202-204 (PKL). Positions 51 and 112 each coordinate Mg(2+).

It belongs to the dethiobiotin synthetase family. In terms of assembly, homodimer. It depends on Mg(2+) as a cofactor.

It is found in the cytoplasm. The enzyme catalyses (7R,8S)-7,8-diammoniononanoate + CO2 + ATP = (4R,5S)-dethiobiotin + ADP + phosphate + 3 H(+). Its pathway is cofactor biosynthesis; biotin biosynthesis; biotin from 7,8-diaminononanoate: step 1/2. Functionally, catalyzes a mechanistically unusual reaction, the ATP-dependent insertion of CO2 between the N7 and N8 nitrogen atoms of 7,8-diaminopelargonic acid (DAPA, also called 7,8-diammoniononanoate) to form a ureido ring. This chain is ATP-dependent dethiobiotin synthetase BioD, found in Bacillus subtilis (strain 168).